Here is a 155-residue protein sequence, read N- to C-terminus: Ribosome maturation factor RimP (155 aa).

The protein belongs to the RimP family.

The protein localises to the cytoplasm. Functionally, required for maturation of 30S ribosomal subunits. In Listeria welshimeri serovar 6b (strain ATCC 35897 / DSM 20650 / CCUG 15529 / CIP 8149 / NCTC 11857 / SLCC 5334 / V8), this protein is Ribosome maturation factor RimP.